Consider the following 484-residue polypeptide: MSFRKVVRQSKFRHVFGQPVKNDQCYEDIRVSRVTWDSTFCAVNPKFLAVIVEASGGGAFMVLPLNKTGRIDKAYPTVCGHTGPVLDIDWCPHNDEVIASGSEDCTVMVWQIPENGLTSPLTEPVVVLEGHTKRVGIITWHPTARNVLLSAGCDNVVLIWNVGTAEELYRLDSLHPDLIYNVSWNHNGSLFCTACKDKSVRIIDPRRGTLVAEREKAHEGARPMRAIFLADGKVFTAGFSRMSERQLALWDPENFEEPMALQELDSSNGALLPFYDPDTSVVYVCGKGDSSIRYFEITDEPPYIHFLNTFTSKEPQRGMGSMPKRGLEVSKCEIARFYKLHERKCEPIVMTVPRKSDLFQDDLYPDTAGPDAALEAEDWVSGQDADPILISLREAYVPSKQRDLKVSRRNVLSDSKPAGYSRSGVSTATAITDIPSGNLAGSGEAGKLEEVMHGLRALRVLVKEQGERISRLEEHLGRMENGDT.

A Phosphoserine modification is found at Ser2. WD repeat units lie at residues 80–120 (GHTG…LTSP), 130–170 (GHTK…ELYR), 174–213 (LHPD…LVAE), 217–260 (AHEG…EPMA), and 265–305 (DSSN…PYIH). A coiled-coil region spans residues 447-481 (KLEEVMHGLRALRVLVKEQGERISRLEEHLGRMEN).

The protein belongs to the WD repeat coronin family. Forms homooligomers, but does not form complexes with the other coronins. Interacts with Arp2/3 complex components, including ACTR2, ARPC1B and ARPC2. Binds actin. Phosphorylation on Ser-2 regulates the interaction with the Arp2/3 complex and cell motility in fibroblasts. Phosphorylation does not seem to affect subcellular location.

The protein localises to the cytoplasm. The protein resides in the cytoskeleton. Its subcellular location is the stress fiber. In terms of biological role, regulates leading edge dynamics and cell motility in fibroblasts. May be involved in cytokinesis and signal transduction. The chain is Coronin-1B (Coro1b) from Rattus norvegicus (Rat).